The chain runs to 134 residues: Profilin-2 (134 aa).

Cys-13 and Cys-118 are disulfide-bonded. Positions 84–100 match the Involved in PIP2 interaction motif; the sequence is AVIRGKKGSGGITIKKT. Residue Thr-114 is modified to Phosphothreonine.

The protein belongs to the profilin family. Occurs in many kinds of cells as a complex with monomeric actin in a 1:1 ratio. In terms of processing, phosphorylated by MAP kinases.

Its subcellular location is the cytoplasm. It localises to the cytoskeleton. In terms of biological role, binds to actin and affects the structure of the cytoskeleton. At high concentrations, profilin prevents the polymerization of actin, whereas it enhances it at low concentrations. This is Profilin-2 from Olea europaea (Common olive).